Reading from the N-terminus, the 953-residue chain is Ribonuclease E (953 aa).

Disordered regions lie at residues 1–23 (MIDG…PDRL) and 118–314 (VAPQ…RRRP). Basic and acidic residues predominate over residues 14 to 23 (SQHEELPDRL). Residues 127-150 (LADDEDVDDGPDYVADDSDADDEG) show a composition bias toward acidic residues. Residues 157-169 (NRRRRRGRRGRGR) show a composition bias toward basic residues. Over residues 183–193 (DQQSEPRAQQF) the composition is skewed to polar residues. Over residues 199-223 (AETDDGDDRDSEDTEAGDNGEDENG) the composition is skewed to acidic residues. The span at 230–240 (RRRRRRRRRKS) shows a compositional bias: basic residues. Basic and acidic residues-rich tracts occupy residues 263-272 (VHERVPRAGD) and 294-311 (TRLE…DAGR). An S1 motif domain is found at 376–453 (GNIYLGIVQN…GHKGARLTTQ (78 aa)). Residues aspartate 647 and aspartate 691 each coordinate Mg(2+). Cysteine 749 and cysteine 752 together coordinate Zn(2+). Disordered stretches follow at residues 766–808 (SAAA…APGE) and 822–953 (LAGR…IRLD). Positions 848–915 (DLDDTAQADF…DADVDEEDAA (68 aa)) are enriched in acidic residues.

Belongs to the RNase E/G family. As to quaternary structure, assembles into a homotetramer formed by a dimer of dimers. Interacts with DNA-binding protein HU (hupB). Requires Mg(2+) as cofactor. The cofactor is Zn(2+).

It localises to the cytoplasm. The catalysed reaction is Endonucleolytic cleavage of single-stranded RNA in A- and U-rich regions.. Functionally, endoribonuclease that plays a central role in RNA processing and decay. Plays a major role in pre-16S rRNA maturation, probably generating the mature 5'-end, and a minor role in pre-5S and pre-23S rRNA maturation. Probably also processes tRNA. RNase E and HupB jointly contribute to cellular adaptation to changing growth conditions and survival during antibiotic treatment and in the host. The polypeptide is Ribonuclease E (Mycobacterium tuberculosis (strain ATCC 25618 / H37Rv)).